We begin with the raw amino-acid sequence, 549 residues long: Arginine--tRNA ligase (549 aa).

The 'HIGH' region signature appears at 132 to 142 (ANPTGPLHIGH).

It belongs to the class-I aminoacyl-tRNA synthetase family. In terms of assembly, monomer.

Its subcellular location is the cytoplasm. The enzyme catalyses tRNA(Arg) + L-arginine + ATP = L-arginyl-tRNA(Arg) + AMP + diphosphate. The polypeptide is Arginine--tRNA ligase (Paenarthrobacter aurescens (strain TC1)).